Reading from the N-terminus, the 239-residue chain is Small ribosomal subunit protein uS3 (239 aa).

A KH type-2 domain is found at 39–107 (VRQVLRKKMS…SVHINVIEVR (69 aa)). Positions 214–239 (GQEKQDDGSRGDRNADRSSRRSREVR) are disordered. Positions 216-239 (EKQDDGSRGDRNADRSSRRSREVR) are enriched in basic and acidic residues.

The protein belongs to the universal ribosomal protein uS3 family. Part of the 30S ribosomal subunit. Forms a tight complex with proteins S10 and S14.

In terms of biological role, binds the lower part of the 30S subunit head. Binds mRNA in the 70S ribosome, positioning it for translation. This is Small ribosomal subunit protein uS3 from Xylella fastidiosa (strain M12).